Here is a 492-residue protein sequence, read N- to C-terminus: Bifunctional purine biosynthesis protein PurH (492 aa).

The region spanning 1 to 144 (MKKAILSVSN…KNYKHVTTIV (144 aa)) is the MGS-like domain.

The protein belongs to the PurH family.

It catalyses the reaction (6R)-10-formyltetrahydrofolate + 5-amino-1-(5-phospho-beta-D-ribosyl)imidazole-4-carboxamide = 5-formamido-1-(5-phospho-D-ribosyl)imidazole-4-carboxamide + (6S)-5,6,7,8-tetrahydrofolate. The catalysed reaction is IMP + H2O = 5-formamido-1-(5-phospho-D-ribosyl)imidazole-4-carboxamide. The protein operates within purine metabolism; IMP biosynthesis via de novo pathway; 5-formamido-1-(5-phospho-D-ribosyl)imidazole-4-carboxamide from 5-amino-1-(5-phospho-D-ribosyl)imidazole-4-carboxamide (10-formyl THF route): step 1/1. It functions in the pathway purine metabolism; IMP biosynthesis via de novo pathway; IMP from 5-formamido-1-(5-phospho-D-ribosyl)imidazole-4-carboxamide: step 1/1. In Staphylococcus aureus (strain Newman), this protein is Bifunctional purine biosynthesis protein PurH.